Here is a 367-residue protein sequence, read N- to C-terminus: Forkhead box protein I2-B (367 aa).

The segment covering 31–40 has biased composition (low complexity); it reads QQQNQQLPQR. A disordered region spans residues 31-51; it reads QQQNQQLPQRPAAPPAPGYGL. A DNA-binding region (fork-head) is located at residues 124–218; sequence RPPYSYSSLI…DNGNFRRKRK (95 aa). Positions 224–254 are disordered; the sequence is VGAGFDEESNEDKKPLALKSLGPDSPGGASV.

It is found in the nucleus. Its function is as follows. Possible transcriptional activator. This Xenopus laevis (African clawed frog) protein is Forkhead box protein I2-B (foxi2-b).